Here is a 472-residue protein sequence, read N- to C-terminus: Fumarate hydratase class II (472 aa).

A disordered region spans residues 1-20 (MSPHENPSVETRTESDTFGP). Substrate is bound by residues 105-107 (SGT), 136-139 (HPND), 146-148 (SSN), and Thr-194. Residues 127-149 (GKRGGKSPVHPNDHCNRGQSSND) are disordered. His-195 acts as the Proton donor/acceptor in catalysis. The active site involves Ser-325. Residues Ser-326 and 331 to 333 (KVN) each bind substrate.

The protein belongs to the class-II fumarase/aspartase family. Fumarase subfamily. In terms of assembly, homotetramer.

It is found in the cytoplasm. It catalyses the reaction (S)-malate = fumarate + H2O. It participates in carbohydrate metabolism; tricarboxylic acid cycle; (S)-malate from fumarate: step 1/1. Its function is as follows. Involved in the TCA cycle. Catalyzes the stereospecific interconversion of fumarate to L-malate. This Methylorubrum extorquens (strain ATCC 14718 / DSM 1338 / JCM 2805 / NCIMB 9133 / AM1) (Methylobacterium extorquens) protein is Fumarate hydratase class II.